The chain runs to 89 residues: Small ribosomal subunit protein uS15 (89 aa).

The protein belongs to the universal ribosomal protein uS15 family. In terms of assembly, part of the 30S ribosomal subunit. Forms a bridge to the 50S subunit in the 70S ribosome, contacting the 23S rRNA.

In terms of biological role, one of the primary rRNA binding proteins, it binds directly to 16S rRNA where it helps nucleate assembly of the platform of the 30S subunit by binding and bridging several RNA helices of the 16S rRNA. Functionally, forms an intersubunit bridge (bridge B4) with the 23S rRNA of the 50S subunit in the ribosome. In Chlamydia caviae (strain ATCC VR-813 / DSM 19441 / 03DC25 / GPIC) (Chlamydophila caviae), this protein is Small ribosomal subunit protein uS15.